We begin with the raw amino-acid sequence, 139 residues long: Deoxyuridine 5'-triphosphate nucleotidohydrolase (139 aa).

Residues Arg58–Gly60, Asn71, Leu75–Asp77, and Met85 each bind substrate.

This sequence belongs to the dUTPase family. Mg(2+) is required as a cofactor.

It catalyses the reaction dUTP + H2O = dUMP + diphosphate + H(+). The protein operates within pyrimidine metabolism; dUMP biosynthesis; dUMP from dCTP (dUTP route): step 2/2. This enzyme is involved in nucleotide metabolism: it produces dUMP, the immediate precursor of thymidine nucleotides and it decreases the intracellular concentration of dUTP so that uracil cannot be incorporated into DNA. The protein is Deoxyuridine 5'-triphosphate nucleotidohydrolase of Gamma-proteobacterium EBAC31A08.